We begin with the raw amino-acid sequence, 413 residues long: Serine/threonine-protein kinase ppk27 (413 aa).

Residues 102-403 enclose the Protein kinase domain; that stretch reads WSINTKITST…LKDFNKHGNF (302 aa). ATP is bound by residues 108 to 116 and Lys-133; that span reads ITSTEQREV. The active-site Proton acceptor is Asp-231.

It belongs to the protein kinase superfamily. Ser/Thr protein kinase family.

The protein localises to the cytoplasm. It carries out the reaction L-seryl-[protein] + ATP = O-phospho-L-seryl-[protein] + ADP + H(+). The enzyme catalyses L-threonyl-[protein] + ATP = O-phospho-L-threonyl-[protein] + ADP + H(+). The protein is Serine/threonine-protein kinase ppk27 (ppk27) of Schizosaccharomyces pombe (strain 972 / ATCC 24843) (Fission yeast).